Here is a 165-residue protein sequence, read N- to C-terminus: Crossover junction endodeoxyribonuclease RuvC (165 aa).

Residues Asp8, Glu67, and Asp139 contribute to the active site. Residues Asp8, Glu67, and Asp139 each coordinate Mg(2+).

Belongs to the RuvC family. In terms of assembly, homodimer which binds Holliday junction (HJ) DNA. The HJ becomes 2-fold symmetrical on binding to RuvC with unstacked arms; it has a different conformation from HJ DNA in complex with RuvA. In the full resolvosome a probable DNA-RuvA(4)-RuvB(12)-RuvC(2) complex forms which resolves the HJ. The cofactor is Mg(2+).

It localises to the cytoplasm. It catalyses the reaction Endonucleolytic cleavage at a junction such as a reciprocal single-stranded crossover between two homologous DNA duplexes (Holliday junction).. In terms of biological role, the RuvA-RuvB-RuvC complex processes Holliday junction (HJ) DNA during genetic recombination and DNA repair. Endonuclease that resolves HJ intermediates. Cleaves cruciform DNA by making single-stranded nicks across the HJ at symmetrical positions within the homologous arms, yielding a 5'-phosphate and a 3'-hydroxyl group; requires a central core of homology in the junction. The consensus cleavage sequence is 5'-(A/T)TT(C/G)-3'. Cleavage occurs on the 3'-side of the TT dinucleotide at the point of strand exchange. HJ branch migration catalyzed by RuvA-RuvB allows RuvC to scan DNA until it finds its consensus sequence, where it cleaves and resolves the cruciform DNA. This Alkalilimnicola ehrlichii (strain ATCC BAA-1101 / DSM 17681 / MLHE-1) protein is Crossover junction endodeoxyribonuclease RuvC.